Here is a 468-residue protein sequence, read N- to C-terminus: Probable Xaa-Pro aminopeptidase PEPP (468 aa).

Residues Asp264, Asp275, Glu398, and Glu438 each coordinate Mn(2+).

This sequence belongs to the peptidase M24B family. Mn(2+) serves as cofactor.

The enzyme catalyses Release of any N-terminal amino acid, including proline, that is linked to proline, even from a dipeptide or tripeptide.. Its function is as follows. Catalyzes the removal of a penultimate prolyl residue from the N-termini of peptides. This chain is Probable Xaa-Pro aminopeptidase PEPP (PEPP), found in Ajellomyces dermatitidis (strain ER-3 / ATCC MYA-2586) (Blastomyces dermatitidis).